The sequence spans 188 residues: UPF0301 protein PD_1276 (188 aa).

It belongs to the UPF0301 (AlgH) family.

The chain is UPF0301 protein PD_1276 from Xylella fastidiosa (strain Temecula1 / ATCC 700964).